The sequence spans 661 residues: Solute carrier organic anion transporter family member 1A4 (661 aa).

Over 1 to 20 (MGKSEKRVATHGVRCFAKIK) the chain is Cytoplasmic. Residues 21–40 (MFLLALTCAYVSKSLSGTYM) form a helical membrane-spanning segment. The Extracellular portion of the chain corresponds to 41-59 (NSMLTQIERQFGIPTSIVG). Residues 60 to 80 (LINGSFEIGNLLLIIFVSYFG) form a helical membrane-spanning segment. At 81 to 86 (TKLHRP) the chain is on the cytoplasmic side. The helical transmembrane segment at 87–111 (IMIGVGCAVMGLGCFLISLPHFLMG) threads the bilayer. Topologically, residues 112-154 (QYEYETILPTSNVSSNSFFCVENRSQTLNPTQDPSECVKEMKS) are extracellular. 2 N-linked (GlcNAc...) asparagine glycosylation sites follow: Asn-123 and Asn-134. The chain crosses the membrane as a helical span at residues 155–183 (LMWIYVLVGNIIRGIGETPIMPLGISYIE). Over 184-202 (DFAKSENSPLYIGILETGM) the chain is Cytoplasmic. Residues 203–223 (TIGPLIGLLLASSCANIYVDI) traverse the membrane as a helical segment. Residues 224-241 (ESVNTDDLTITPTDTRWV) lie on the Extracellular side of the membrane. The chain crosses the membrane as a helical span at residues 242–266 (GAWWIGFLVCAGVNILTSFPFFFFP). Residues 267-310 (KTLPKEGLQENVDGTENAKEKKHRKKAKEEKRGITKDFFVFMKS) are Cytoplasmic-facing. A helical membrane pass occupies residues 311-332 (LSCNPIYMLFILISVLQFNAFI). Topologically, residues 333-352 (NSFTFMPKYLEQQYGKSTAE) are extracellular. Residues 353–376 (VVFLMGLYMLPPICLGYLIGGLIM) traverse the membrane as a helical segment. The Cytoplasmic portion of the chain corresponds to 377 to 380 (KKFK). Residues 381–404 (VTVKKAAHLAFWLCLSEYLLSFLS) form a helical membrane-spanning segment. At 405–512 (YVMTCDNFPV…PDCANKLQYF (108 aa)) the chain is on the extracellular side. One can recognise a Kazal-like domain in the interval 432–487 (NKVLADCNTRCNCSTNTWDPVCGDNGLAYMSACLAGCEKSVGTGTNMVFQNCSCIQ). Intrachain disulfides connect Cys-438–Cys-468, Cys-444–Cys-464, and Cys-453–Cys-485. Asn-443 carries an N-linked (GlcNAc...) asparagine glycan. N-linked (GlcNAc...) asparagine glycans are attached at residues Asn-482 and Asn-491. Residues 513–535 (LIIAIFGCFIYSLAGIPGYMVLL) traverse the membrane as a helical segment. The Cytoplasmic portion of the chain corresponds to 536–544 (RCIKSEEKS). Residues 545–570 (LGVGLHAFCIRILAGIPAPIYFGALI) form a helical membrane-spanning segment. Topologically, residues 571 to 604 (DRTCLHWGTLKCGEPGACRMYDINSFRRLYLGLP) are extracellular. A helical membrane pass occupies residues 605–622 (AALRGASFVPAFFILRLT). Topologically, residues 623–661 (RTFQFPGDIESSKTDHAEMKLTLKESECTEVLRSKVTED) are cytoplasmic. Residues Ser-633 and Ser-634 each carry the phosphoserine modification.

The protein belongs to the organo anion transporter (TC 2.A.60) family. As to expression, highly expressed in brain, liver, and kidney but not expressed in heart, spleen, lung, skeletal muscle, and testis.

Its subcellular location is the cell membrane. It catalyses the reaction estrone 3-sulfate(out) = estrone 3-sulfate(in). It carries out the reaction taurocholate(out) = taurocholate(in). The catalysed reaction is prostaglandin E2(out) = prostaglandin E2(in). The enzyme catalyses L-thyroxine(out) = L-thyroxine(in). Its function is as follows. Mediates the Na(+)-independent transport of organic anions such as taurocholate, cholate, 17-beta-glucuronosyl estradiol, prostaglandin E2, estrone 3-sulfate, L-thyroxine (T4), the cardiac glycosides ouabain and digoxin and thyroid hormones. May play an especially important role in the brain accumulation and toxicity of digoxin and in the hepatobiliary and renal excretion of cardiac glycosides. Shows a pH-sensitive substrate specificity which may be ascribed to the protonation state of the binding site and leads to a stimulation of substrate transport in an acidic microenvironment. Hydrogencarbonate/HCO3(-) acts as the probable counteranion that exchanges for organic anions. The sequence is that of Solute carrier organic anion transporter family member 1A4 (Slco1a4) from Rattus norvegicus (Rat).